A 156-amino-acid chain; its full sequence is Cyanate hydratase (156 aa).

Catalysis depends on residues R96, E99, and S122.

Belongs to the cyanase family.

The catalysed reaction is cyanate + hydrogencarbonate + 3 H(+) = NH4(+) + 2 CO2. Its function is as follows. Catalyzes the reaction of cyanate with bicarbonate to produce ammonia and carbon dioxide. The chain is Cyanate hydratase from Pseudomonas aeruginosa (strain UCBPP-PA14).